The sequence spans 385 residues: 8-amino-7-oxononanoate synthase (385 aa).

Position 21 (Arg21) interacts with substrate. 108–109 (GF) lines the pyridoxal 5'-phosphate pocket. Residue His133 participates in substrate binding. Ser179, His207, and Thr233 together coordinate pyridoxal 5'-phosphate. Lys236 bears the N6-(pyridoxal phosphate)lysine mark. Thr352 contacts substrate.

This sequence belongs to the class-II pyridoxal-phosphate-dependent aminotransferase family. BioF subfamily. In terms of assembly, homodimer. Pyridoxal 5'-phosphate serves as cofactor.

The catalysed reaction is 6-carboxyhexanoyl-[ACP] + L-alanine + H(+) = (8S)-8-amino-7-oxononanoate + holo-[ACP] + CO2. The protein operates within cofactor biosynthesis; biotin biosynthesis. Functionally, catalyzes the decarboxylative condensation of pimeloyl-[acyl-carrier protein] and L-alanine to produce 8-amino-7-oxononanoate (AON), [acyl-carrier protein], and carbon dioxide. The sequence is that of 8-amino-7-oxononanoate synthase from Salmonella choleraesuis (strain SC-B67).